The following is a 310-amino-acid chain: Malate dehydrogenase (310 aa).

Residues 7-13 (GAAGGIG) and D34 each bind NAD(+). Residues R81 and R87 each coordinate substrate. Residues N94 and 117 to 119 (ITN) contribute to the NAD(+) site. Residues N119 and R153 each contribute to the substrate site. Residue H177 is the Proton acceptor of the active site. M227 provides a ligand contact to NAD(+).

It belongs to the LDH/MDH superfamily. MDH type 1 family. Homodimer.

The enzyme catalyses (S)-malate + NAD(+) = oxaloacetate + NADH + H(+). Its function is as follows. Catalyzes the reversible oxidation of malate to oxaloacetate. This is Malate dehydrogenase from Idiomarina loihiensis (strain ATCC BAA-735 / DSM 15497 / L2-TR).